We begin with the raw amino-acid sequence, 91 residues long: Probable Fe(2+)-trafficking protein (91 aa).

This sequence belongs to the Fe(2+)-trafficking protein family. In terms of assembly, monomer.

In terms of biological role, could be a mediator in iron transactions between iron acquisition and iron-requiring processes, such as synthesis and/or repair of Fe-S clusters in biosynthetic enzymes. The polypeptide is Probable Fe(2+)-trafficking protein (Salmonella agona (strain SL483)).